Consider the following 703-residue polypeptide: uncharacterized protein (703 aa).

The signal sequence occupies residues 1–23; that stretch reads MKQIMIFLTSFMLLAMTGQTALA. Residues 673 to 693 form a helical membrane-spanning segment; the sequence is MYIGVLALIMVVAAVFIWIAV.

It localises to the cell membrane. This is an uncharacterized protein from Bacillus subtilis (strain 168).